Consider the following 191-residue polypeptide: Adenylate kinase (191 aa).

12-17 (GSGKTT) provides a ligand contact to ATP. Residues 33 to 62 (STGDLLRAEVASGSELGKLIDSFISKGNLV) form an NMP region. AMP is bound by residues T34, R39, 60–62 (NLV), 87–90 (GYPR), and Q94. Positions 129 to 135 (GRARGAD) are LID. R130 is an ATP binding site. The AMP site is built by R132 and R144. Residue R172 participates in ATP binding.

The protein belongs to the adenylate kinase family. Monomer.

It is found in the cytoplasm. The enzyme catalyses AMP + ATP = 2 ADP. Its pathway is purine metabolism; AMP biosynthesis via salvage pathway; AMP from ADP: step 1/1. In terms of biological role, catalyzes the reversible transfer of the terminal phosphate group between ATP and AMP. Plays an important role in cellular energy homeostasis and in adenine nucleotide metabolism. In Campylobacter fetus subsp. fetus (strain 82-40), this protein is Adenylate kinase.